Consider the following 366-residue polypeptide: Alanine racemase (366 aa).

Catalysis depends on Lys-35, which acts as the Proton acceptor; specific for D-alanine. Lys-35 is subject to N6-(pyridoxal phosphate)lysine. A substrate-binding site is contributed by Arg-130. The active-site Proton acceptor; specific for L-alanine is the Tyr-254. A substrate-binding site is contributed by Met-302.

It belongs to the alanine racemase family. Pyridoxal 5'-phosphate is required as a cofactor.

It carries out the reaction L-alanine = D-alanine. It participates in amino-acid biosynthesis; D-alanine biosynthesis; D-alanine from L-alanine: step 1/1. In terms of biological role, catalyzes the interconversion of L-alanine and D-alanine. May also act on other amino acids. This is Alanine racemase (alr) from Variovorax paradoxus (strain S110).